A 1158-amino-acid polypeptide reads, in one-letter code: Formin-C (1158 aa).

Disordered stretches follow at residues 8–29 (INGNEHRTSSTPQQPQQNPSVS), 417–523 (PNTS…LSCL), and 990–1052 (INNN…NNSQ). The region spanning 20–388 (QQPQQNPSVS…EYSQRKLEMI (369 aa)) is the GBD/FH3 domain. Residues 417-437 (PNTSDLFDSSTLEDTYDGNND) are compositionally biased toward polar residues. The segment covering 438 to 481 (TNSCTSISTSSTPIHISQPTTLIVPSTTPNHPPQQSQQTPPLQL) has biased composition (low complexity). The stretch at 479-515 (LQLQKEKEKEKEKEKEKEKEKEKEQQQQQQQSNKQST) forms a coiled coil. Residues 482-503 (QKEKEKEKEKEKEKEKEKEKEQ) show a composition bias toward basic and acidic residues. The FH2 domain occupies 601-998 (TKSPITPSKR…IINNNNNNNN (398 aa)). The 25-residue stretch at 1134–1158 (SDDPMAVIIEALKTGSPNDMVKRAF) folds into the DAD domain.

This sequence belongs to the formin homology family. Diaphanous subfamily. As to quaternary structure, interacts (via GBD/FH3 domain) with activated Rho-GTPases.

The protein localises to the cytoplasm. It is found in the cytosol. It localises to the cytoskeleton. Formins play an important role in the nucleation of actin and the formation of linear actin filaments. This Dictyostelium discoideum (Social amoeba) protein is Formin-C (forC).